A 402-amino-acid polypeptide reads, in one-letter code: Triose phosphate/phosphate translocator, chloroplastic (402 aa).

The N-terminal 72 residues, 1–72 (MESRVLSRAT…KGASLLRPCP (72 aa)), are a transit peptide targeting the chloroplast. The Chloroplast intermembrane segment spans residues 73–96 (ATAGGNDSAGEEKVAPVGFFSRYP). The chain crosses the membrane as a helical span at residues 97–117 (ALTTGFFFFTWYFLNVIFNIL). Over 118-129 (NKKIYNYFPYPY) the chain is Lumenal. A helical membrane pass occupies residues 130–150 (FVSVIHLAVGVVYCLVSWTVG). The Chloroplast intermembrane portion of the chain corresponds to 151-207 (LPKRAPIDGNLLKLLIPVAVCHALGHVTSNVSFAAVAVSFTHTVKALEPFFNAAASQ). A helical membrane pass occupies residues 208-228 (FILGQSIPITLWLSLAPVVIG). The Lumenal portion of the chain corresponds to 229-272 (VSMASLTELSFNWLGFISAMISNISFTYRSIYSKKAMTDMDSTN). A helical transmembrane segment spans residues 273–292 (IYAYISIIALIVCIPPALII). Residues 293–370 (EGPTLLKTGF…IIFGNKISTQ (78 aa)) are Chloroplast intermembrane-facing. A helical transmembrane segment spans residues 371–391 (TGIGTGIAIAGVALYSFIKAQ). The Lumenal portion of the chain corresponds to 392-402 (IEEEKRQAKAA).

Belongs to the TPT transporter family. TPT (TC 2.A.7.9) subfamily. Homodimer.

The protein resides in the plastid. It localises to the chloroplast membrane. In terms of biological role, mediates the export of fixed carbons from the chloroplasts into the cytosol in the form of triose phosphates. This is Triose phosphate/phosphate translocator, chloroplastic from Pisum sativum (Garden pea).